Consider the following 118-residue polypeptide: Ribosome-binding factor A (118 aa).

This sequence belongs to the RbfA family. In terms of assembly, monomer. Binds 30S ribosomal subunits, but not 50S ribosomal subunits or 70S ribosomes.

Its subcellular location is the cytoplasm. Its function is as follows. One of several proteins that assist in the late maturation steps of the functional core of the 30S ribosomal subunit. Associates with free 30S ribosomal subunits (but not with 30S subunits that are part of 70S ribosomes or polysomes). Required for efficient processing of 16S rRNA. May interact with the 5'-terminal helix region of 16S rRNA. The chain is Ribosome-binding factor A from Dehalococcoides mccartyi (strain ATCC BAA-2100 / JCM 16839 / KCTC 5957 / BAV1).